The chain runs to 281 residues: MDRGQDAVIVNADSAQVYADLRVLSARPSDEEMRGVPHVLFGAWDGARACSAADWAAAARREIAAAHQRGALPILVGGTGLYIRTLLDGIAPVPEIDPQVREEVRAMPLEAAYAELEKSDPERARKLAPADAQRITRALEVMRSTGRPLAYWQQQLSGGIGNDVALAPLILLPERQWLYRRCDLRFELMWDGGALEEVEALLARDLPDSLPVMRAIGVPEIAAFLRGDLSRDAAIASGQQATRNYAKRQYTWLRHQNPGDWPRMEYDNSIDSAKIASLLRL.

2 interaction with substrate tRNA regions span residues 13-16 and 133-137; these read DSAQ and QRITR.

This sequence belongs to the IPP transferase family. As to quaternary structure, monomer. Mg(2+) serves as cofactor.

It catalyses the reaction adenosine(37) in tRNA + dimethylallyl diphosphate = N(6)-dimethylallyladenosine(37) in tRNA + diphosphate. In terms of biological role, catalyzes the transfer of a dimethylallyl group onto the adenine at position 37 in tRNAs that read codons beginning with uridine, leading to the formation of N6-(dimethylallyl)adenosine (i(6)A). This is tRNA dimethylallyltransferase from Novosphingobium aromaticivorans (strain ATCC 700278 / DSM 12444 / CCUG 56034 / CIP 105152 / NBRC 16084 / F199).